We begin with the raw amino-acid sequence, 47 residues long: Ribosome-inactivating protein luffin P1 (47 aa).

2 disulfides stabilise this stretch: Cys-12-Cys-33 and Cys-16-Cys-29.

As to quaternary structure, homotetramer.

The catalysed reaction is Endohydrolysis of the N-glycosidic bond at one specific adenosine on the 28S rRNA.. Its function is as follows. Inhibits protein synthesis in animal cells. The chain is Ribosome-inactivating protein luffin P1 from Luffa aegyptiaca (Sponge gourd).